Reading from the N-terminus, the 132-residue chain is UPF0357 protein YCL012C (132 aa).

Residues 1–25 (MWDLFYFKVFFWVVLISLCIFMVHR) form the signal peptide.

Belongs to the UPF0357 family.

This chain is UPF0357 protein YCL012C (YCL012C), found in Saccharomyces bayanus (Yeast).